The sequence spans 352 residues: Ion-translocating oxidoreductase complex subunit D (352 aa).

4 helical membrane-spanning segments follow: residues 20-40, 42-62, 89-109, and 123-143; these read IMLL…WFFG, GTLV…ALVL, IPPL…AIIA, and PAMI…TSWL. Thr-187 is modified (FMN phosphoryl threonine). 5 helical membrane-spanning segments follow: residues 214 to 234, 242 to 262, 267 to 287, 301 to 321, and 322 to 342; these read ILAG…GLWL, WHIP…GWLF, LAAP…FFIL, LIFG…GGYP, and DGVA…DYYT.

It belongs to the NqrB/RnfD family. As to quaternary structure, the complex is composed of six subunits: RsxA, RsxB, RsxC, RsxD, RsxE and RsxG. FMN serves as cofactor.

The protein localises to the cell inner membrane. Its function is as follows. Part of a membrane-bound complex that couples electron transfer with translocation of ions across the membrane. Required to maintain the reduced state of SoxR. This Escherichia coli (strain ATCC 8739 / DSM 1576 / NBRC 3972 / NCIMB 8545 / WDCM 00012 / Crooks) protein is Ion-translocating oxidoreductase complex subunit D.